The following is a 177-amino-acid chain: Large ribosomal subunit protein uL6 (177 aa).

It belongs to the universal ribosomal protein uL6 family. As to quaternary structure, part of the 50S ribosomal subunit.

Functionally, this protein binds to the 23S rRNA, and is important in its secondary structure. It is located near the subunit interface in the base of the L7/L12 stalk, and near the tRNA binding site of the peptidyltransferase center. This Janthinobacterium sp. (strain Marseille) (Minibacterium massiliensis) protein is Large ribosomal subunit protein uL6.